The primary structure comprises 217 residues: 7-cyano-7-deazaguanine synthase (217 aa).

An ATP-binding site is contributed by 10–20 (FSGGQDSTTCL). Zn(2+) contacts are provided by C185, C194, C197, and C200.

Belongs to the QueC family. In terms of assembly, homodimer. Zn(2+) is required as a cofactor.

It carries out the reaction 7-carboxy-7-deazaguanine + NH4(+) + ATP = 7-cyano-7-deazaguanine + ADP + phosphate + H2O + H(+). Its pathway is purine metabolism; 7-cyano-7-deazaguanine biosynthesis. Catalyzes the ATP-dependent conversion of 7-carboxy-7-deazaguanine (CDG) to 7-cyano-7-deazaguanine (preQ(0)). The protein is 7-cyano-7-deazaguanine synthase of Streptococcus mutans serotype c (strain ATCC 700610 / UA159).